Consider the following 392-residue polypeptide: Chaperone protein DnaJ (392 aa).

A J domain is found at 5-75; the sequence is DYYEVLGIDK…QKKQQYDQFG (71 aa). Residues 148 to 229 form a CR-type zinc finger; it reads GVEKTIKYKR…CHGTGTAKET (82 aa). Positions 161, 164, 177, 180, 203, 206, 217, and 220 each coordinate Zn(2+). 4 CXXCXGXG motif repeats span residues 161–168, 177–184, 203–210, and 217–224; these read CENCHGTG, CPTCNGQG, CPDCHGTG, and CKHCHGTG.

The protein belongs to the DnaJ family. In terms of assembly, homodimer. Zn(2+) is required as a cofactor.

The protein localises to the cytoplasm. Participates actively in the response to hyperosmotic and heat shock by preventing the aggregation of stress-denatured proteins and by disaggregating proteins, also in an autonomous, DnaK-independent fashion. Unfolded proteins bind initially to DnaJ; upon interaction with the DnaJ-bound protein, DnaK hydrolyzes its bound ATP, resulting in the formation of a stable complex. GrpE releases ADP from DnaK; ATP binding to DnaK triggers the release of the substrate protein, thus completing the reaction cycle. Several rounds of ATP-dependent interactions between DnaJ, DnaK and GrpE are required for fully efficient folding. Also involved, together with DnaK and GrpE, in the DNA replication of plasmids through activation of initiation proteins. In Fusobacterium nucleatum subsp. nucleatum (strain ATCC 25586 / DSM 15643 / BCRC 10681 / CIP 101130 / JCM 8532 / KCTC 2640 / LMG 13131 / VPI 4355), this protein is Chaperone protein DnaJ.